The chain runs to 124 residues: Large ribosomal subunit protein bL20 (124 aa).

It belongs to the bacterial ribosomal protein bL20 family.

In terms of biological role, binds directly to 23S ribosomal RNA and is necessary for the in vitro assembly process of the 50S ribosomal subunit. It is not involved in the protein synthesizing functions of that subunit. In Ehrlichia chaffeensis (strain ATCC CRL-10679 / Arkansas), this protein is Large ribosomal subunit protein bL20.